A 456-amino-acid chain; its full sequence is UDP-N-acetylmuramate--L-alanine ligase (456 aa).

117–123 contacts ATP; it reads GTHGKTT.

Belongs to the MurCDEF family.

It localises to the cytoplasm. It catalyses the reaction UDP-N-acetyl-alpha-D-muramate + L-alanine + ATP = UDP-N-acetyl-alpha-D-muramoyl-L-alanine + ADP + phosphate + H(+). Its pathway is cell wall biogenesis; peptidoglycan biosynthesis. Cell wall formation. This chain is UDP-N-acetylmuramate--L-alanine ligase, found in Clostridium tetani (strain Massachusetts / E88).